Reading from the N-terminus, the 312-residue chain is Protoheme IX farnesyltransferase (312 aa).

The next 8 membrane-spanning stretches (helical) occupy residues 34 to 54, 56 to 76, 119 to 139, 152 to 172, 179 to 199, 225 to 245, 247 to 267, and 283 to 303; these read LVIF…HPVL, FTAI…NMAL, ALVN…YVVI, IVIG…AATG, LLLF…LALF, ILLY…LGYF, WVYG…AINV, and LFAF…LDVL.

The protein belongs to the UbiA prenyltransferase family. Protoheme IX farnesyltransferase subfamily.

The protein localises to the cell inner membrane. The enzyme catalyses heme b + (2E,6E)-farnesyl diphosphate + H2O = Fe(II)-heme o + diphosphate. Its pathway is porphyrin-containing compound metabolism; heme O biosynthesis; heme O from protoheme: step 1/1. Converts heme B (protoheme IX) to heme O by substitution of the vinyl group on carbon 2 of heme B porphyrin ring with a hydroxyethyl farnesyl side group. In Nitrobacter hamburgensis (strain DSM 10229 / NCIMB 13809 / X14), this protein is Protoheme IX farnesyltransferase.